Consider the following 105-residue polypeptide: Spermatogenesis-associated protein 8 (105 aa).

Expressed at high levels in adult testis, at moderate levels in sperm and at low levels in fetal testis. Not detected in other tissues.

The polypeptide is Spermatogenesis-associated protein 8 (SPATA8) (Homo sapiens (Human)).